Here is a 55-residue protein sequence, read N- to C-terminus: UPF0391 membrane protein Neut_2351/Neut_2360 (55 aa).

The next 2 helical transmembrane spans lie at 4-24 and 28-48; these read LAVV…TGVA and AEMA…FWVL.

This sequence belongs to the UPF0391 family.

It localises to the cell membrane. In Nitrosomonas eutropha (strain DSM 101675 / C91 / Nm57), this protein is UPF0391 membrane protein Neut_2351/Neut_2360.